We begin with the raw amino-acid sequence, 253 residues long: POU Class 2 homeobox-associating factor 3 (253 aa).

In terms of domain architecture, OCA spans 5-27 (PKVYQGVRVKMTVKELLQQRRAH).

Belongs to the POU2AF family. Interacts with POU2F3 in a DNA-dependent manner; this interaction increases POU2F3 transactivation activity. In terms of tissue distribution, expressed in tuft cells.

It localises to the cytoplasm. The protein resides in the nucleus. Functionally, transcriptional coactivator that specifically associates with POU2F3. This complex drives the development of tuft cells, a rare a rare chemosensory cells that coordinate immune and neural functions within mucosal epithelial tissues. This Mus musculus (Mouse) protein is POU Class 2 homeobox-associating factor 3.